A 461-amino-acid chain; its full sequence is Photosystem II CP43 reaction center protein (461 aa).

A propeptide spanning residues 1–2 is cleaved from the precursor; that stretch reads ME. Thr-3 carries the N-acetylthreonine modification. Thr-3 carries the post-translational modification Phosphothreonine. The next 5 membrane-spanning stretches (helical) occupy residues 57 to 81, 122 to 143, 166 to 188, 243 to 263, and 279 to 300; these read LFEV…PHLA, LLGP…KDRN, KALY…RKIT, KPFA…LSYS, and WFNN…ASQA. Position 355 (Glu-355) interacts with [CaMn4O5] cluster. Residues 435–459 traverse the membrane as a helical segment; that stretch reads RARAAAAGFEKGIDRDLEPVLSMTP.

It belongs to the PsbB/PsbC family. PsbC subfamily. As to quaternary structure, PSII is composed of 1 copy each of membrane proteins PsbA, PsbB, PsbC, PsbD, PsbE, PsbF, PsbH, PsbI, PsbJ, PsbK, PsbL, PsbM, PsbT, PsbX, PsbY, PsbZ, Psb30/Ycf12, at least 3 peripheral proteins of the oxygen-evolving complex and a large number of cofactors. It forms dimeric complexes. The cofactor is Binds multiple chlorophylls and provides some of the ligands for the Ca-4Mn-5O cluster of the oxygen-evolving complex. It may also provide a ligand for a Cl- that is required for oxygen evolution. PSII binds additional chlorophylls, carotenoids and specific lipids..

It is found in the plastid. The protein resides in the chloroplast thylakoid membrane. Functionally, one of the components of the core complex of photosystem II (PSII). It binds chlorophyll and helps catalyze the primary light-induced photochemical processes of PSII. PSII is a light-driven water:plastoquinone oxidoreductase, using light energy to abstract electrons from H(2)O, generating O(2) and a proton gradient subsequently used for ATP formation. This Ceratophyllum demersum (Rigid hornwort) protein is Photosystem II CP43 reaction center protein.